A 204-amino-acid chain; its full sequence is Ubiquitin-conjugating enzyme E2 S (204 aa).

Positions 14 to 160 (QIIKQVAREI…AKMFTEIHAK (147 aa)) constitute a UBC core domain. The Glycyl thioester intermediate role is filled by Cys-98. The span at 165–176 (SSNNISEGQQES) shows a compositional bias: polar residues. Residues 165–204 (SSNNISEGQQESLPGKKRVAVNEKMCDKKKKDKKRALKRL) form a disordered region. The span at 191–204 (DKKKKDKKRALKRL) shows a compositional bias: basic residues.

Belongs to the ubiquitin-conjugating enzyme family.

It catalyses the reaction S-ubiquitinyl-[E1 ubiquitin-activating enzyme]-L-cysteine + [E2 ubiquitin-conjugating enzyme]-L-cysteine = [E1 ubiquitin-activating enzyme]-L-cysteine + S-ubiquitinyl-[E2 ubiquitin-conjugating enzyme]-L-cysteine.. It functions in the pathway protein modification; protein ubiquitination. Functionally, catalyzes the covalent attachment of ubiquitin to other proteins. Acts as an essential factor of the anaphase promoting complex/cyclosome (APC/C), a cell cycle-regulated ubiquitin ligase that controls progression through mitosis. Acts by specifically elongating polyubiquitin chains initiated by the E2 enzyme UBCH10 on APC/C substrates, enhancing the degradation of APC/C substrates by the proteasome and promoting mitotic exit. In Nematostella vectensis (Starlet sea anemone), this protein is Ubiquitin-conjugating enzyme E2 S.